The sequence spans 439 residues: sn-glycerol-3-phosphate-binding periplasmic protein UgpB (439 aa).

A signal peptide spans 1-25 (MFNNAIRKTSICVALTLAFSANAMA). Residues Y67, E91, S146, S272, G309, Y348, and R399 each contribute to the sn-glycerol 3-phosphate site.

It belongs to the bacterial solute-binding protein 1 family. As to quaternary structure, the complex is composed of two ATP-binding proteins (UgpC), two transmembrane proteins (UgpA and UgpE) and a solute-binding protein (UgpB).

Its subcellular location is the periplasm. In terms of biological role, part of the ABC transporter complex UgpBAEC involved in sn-glycerol-3-phosphate (G3P) import. Binds G3P. The chain is sn-glycerol-3-phosphate-binding periplasmic protein UgpB (ugpB) from Yersinia enterocolitica serotype O:8 / biotype 1B (strain NCTC 13174 / 8081).